The following is a 165-amino-acid chain: Small ribosomal subunit protein uS17c (165 aa).

Residues 1–57 (MSLSFSLLKPPLSSSNPNPFLHGTTTKLSLLPSFSALSLSSSPPSSSTTYTFPVIKA) constitute a chloroplast transit peptide. The interval 128-165 (AVAPEGRQSSATRPKPIQAASDELGIPLESQVEGDKTV) is disordered.

In terms of assembly, component of the chloroplast small ribosomal subunit (SSU). Mature 70S chloroplast ribosomes of higher plants consist of a small (30S) and a large (50S) subunit. The 30S small subunit contains 1 molecule of ribosomal RNA (16S rRNA) and 24 different proteins. The 50S large subunit contains 3 rRNA molecules (23S, 5S and 4.5S rRNA) and 33 different proteins.

It localises to the plastid. The protein resides in the chloroplast. Functionally, component of the chloroplast ribosome (chloro-ribosome), a dedicated translation machinery responsible for the synthesis of chloroplast genome-encoded proteins, including proteins of the transcription and translation machinery and components of the photosynthetic apparatus. In Spinacia oleracea (Spinach), this protein is Small ribosomal subunit protein uS17c (RPS17).